The sequence spans 287 residues: 4-hydroxybenzoate octaprenyltransferase (287 aa).

The next 9 membrane-spanning stretches (helical) occupy residues 21–41 (VGIF…AKGA), 44–64 (FKIA…GCIV), 91–111 (VTEA…LVLL), 112–132 (LNRL…VYPF), 139–159 (LPQL…FAAT), 160–180 (VGHV…WPIV), 211–231 (LMIG…GWYL), 235–255 (YWFY…QFLI), and 263–283 (CFAA…GILL).

It belongs to the UbiA prenyltransferase family. Requires Mg(2+) as cofactor.

Its subcellular location is the cell inner membrane. It carries out the reaction all-trans-octaprenyl diphosphate + 4-hydroxybenzoate = 4-hydroxy-3-(all-trans-octaprenyl)benzoate + diphosphate. It functions in the pathway cofactor biosynthesis; ubiquinone biosynthesis. Its function is as follows. Catalyzes the prenylation of para-hydroxybenzoate (PHB) with an all-trans polyprenyl group. Mediates the second step in the final reaction sequence of ubiquinone-8 (UQ-8) biosynthesis, which is the condensation of the polyisoprenoid side chain with PHB, generating the first membrane-bound Q intermediate 3-octaprenyl-4-hydroxybenzoate. The polypeptide is 4-hydroxybenzoate octaprenyltransferase (Coxiella burnetii (strain RSA 331 / Henzerling II)).